A 165-amino-acid polypeptide reads, in one-letter code: Phosphopantetheine adenylyltransferase (165 aa).

A substrate-binding site is contributed by T10. Residues 10-11 (TF) and H18 contribute to the ATP site. Positions 42, 74, and 88 each coordinate substrate. Residues 89–91 (GLR), E99, and 124–130 (NAFISSS) each bind ATP.

The protein belongs to the bacterial CoaD family. Homohexamer. It depends on Mg(2+) as a cofactor.

The protein resides in the cytoplasm. It catalyses the reaction (R)-4'-phosphopantetheine + ATP + H(+) = 3'-dephospho-CoA + diphosphate. Its pathway is cofactor biosynthesis; coenzyme A biosynthesis; CoA from (R)-pantothenate: step 4/5. Functionally, reversibly transfers an adenylyl group from ATP to 4'-phosphopantetheine, yielding dephospho-CoA (dPCoA) and pyrophosphate. The chain is Phosphopantetheine adenylyltransferase from Helicobacter hepaticus (strain ATCC 51449 / 3B1).